Consider the following 220-residue polypeptide: uncharacterized protein (220 aa).

A run of 7 helical transmembrane segments spans residues 6-26 (FSIL…LIVW), 33-53 (IVRL…LRGI), 59-79 (ALIA…PWLL), 103-123 (LLIT…VVNL), 126-146 (GVTI…LFVM), 157-177 (AGFL…TAGV), and 179-199 (LIVE…IGVL).

The protein localises to the cell membrane. This is an uncharacterized protein from Mycobacterium tuberculosis (strain ATCC 25618 / H37Rv).